A 291-amino-acid chain; its full sequence is Protease HtpX homolog (291 aa).

The next 2 helical transmembrane spans lie at 4–24 and 38–58; these read VFLFLITNLAVILVLSFSARL and MGMLLAFAALIGFGGSFISLL. His-144 contributes to the Zn(2+) binding site. Glu-145 is an active-site residue. Zn(2+) is bound at residue His-148. 2 helical membrane passes run 159–179 and 199–219; these read LIQGVVNTFVIFLARVFAYAL and ISSIAFEIVFGILASIVVMYF. Residue Glu-224 participates in Zn(2+) binding.

This sequence belongs to the peptidase M48B family. It depends on Zn(2+) as a cofactor.

The protein localises to the cell inner membrane. This chain is Protease HtpX homolog, found in Chlorobium phaeovibrioides (strain DSM 265 / 1930) (Prosthecochloris vibrioformis (strain DSM 265)).